We begin with the raw amino-acid sequence, 693 residues long: Elongation factor G (693 aa).

Residues 8–282 (EKTRNIGIMA…AVIDYLPSPL (275 aa)) form the tr-type G domain. Residues 17–24 (AHVDAGKT), 81–85 (DTPGH), and 135–138 (NKMD) each bind GTP.

Belongs to the TRAFAC class translation factor GTPase superfamily. Classic translation factor GTPase family. EF-G/EF-2 subfamily.

The protein resides in the cytoplasm. In terms of biological role, catalyzes the GTP-dependent ribosomal translocation step during translation elongation. During this step, the ribosome changes from the pre-translocational (PRE) to the post-translocational (POST) state as the newly formed A-site-bound peptidyl-tRNA and P-site-bound deacylated tRNA move to the P and E sites, respectively. Catalyzes the coordinated movement of the two tRNA molecules, the mRNA and conformational changes in the ribosome. The protein is Elongation factor G of Streptococcus pneumoniae (strain CGSP14).